The chain runs to 174 residues: uncharacterized protein (174 aa).

This is an uncharacterized protein from Homo sapiens (Human).